Reading from the N-terminus, the 224-residue chain is Cytidylate kinase (224 aa).

An ATP-binding site is contributed by 11–19 (GPAAAGKST).

It belongs to the cytidylate kinase family. Type 1 subfamily.

The protein localises to the cytoplasm. The enzyme catalyses CMP + ATP = CDP + ADP. It carries out the reaction dCMP + ATP = dCDP + ADP. The polypeptide is Cytidylate kinase (cmk) (Bacillus subtilis (strain 168)).